The primary structure comprises 88 residues: Small ribosomal subunit protein uS15 (88 aa).

It belongs to the universal ribosomal protein uS15 family. In terms of assembly, part of the 30S ribosomal subunit. Forms a bridge to the 50S subunit in the 70S ribosome, contacting the 23S rRNA.

Its function is as follows. One of the primary rRNA binding proteins, it binds directly to 16S rRNA where it helps nucleate assembly of the platform of the 30S subunit by binding and bridging several RNA helices of the 16S rRNA. Functionally, forms an intersubunit bridge (bridge B4) with the 23S rRNA of the 50S subunit in the ribosome. In Psychrobacter arcticus (strain DSM 17307 / VKM B-2377 / 273-4), this protein is Small ribosomal subunit protein uS15.